An 86-amino-acid polypeptide reads, in one-letter code: MSIDTQAIIKKYQSKTGDTGSSNVQIALLTARIKHLTEHFKTHKKDHHSRRGLLHLVSQRKKLLIYLKDANTASYSNLIIHLGLRK.

The protein belongs to the universal ribosomal protein uS15 family. In terms of assembly, part of the 30S ribosomal subunit. Forms a bridge to the 50S subunit in the 70S ribosome, contacting the 23S rRNA.

Functionally, one of the primary rRNA binding proteins, it binds directly to 16S rRNA where it helps nucleate assembly of the platform of the 30S subunit by binding and bridging several RNA helices of the 16S rRNA. Its function is as follows. Forms an intersubunit bridge (bridge B4) with the 23S rRNA of the 50S subunit in the ribosome. This chain is Small ribosomal subunit protein uS15, found in Ruthia magnifica subsp. Calyptogena magnifica.